Reading from the N-terminus, the 511-residue chain is Ribosome biogenesis protein YTM1 (511 aa).

The interval 9–112 is ubiquitin-like (UBL) domain; it reads VKVVFVTRDE…EVSLSIEYIR (104 aa). The tract at residues 122–511 is sufficient for interaction with ERB1 and association with 66S pre-ribosomes; that stretch reads SFSNPDWVAA…IQINNNPQSA (390 aa). WD repeat units lie at residues 124-168, 170-208, 248-287, 332-372, 383-423, 429-470, and 477-511; these read SNPD…TGQL, GHNSAAKAVRWISNDQLVSGGSDRLLYLWNPDGKKYRRK, GHTAPINDLAVHAKTGKIISASADGSVGLWSTDYNDMPAI, GHSA…AVQS, TRST…QVAT, GHTN…SLHV, and TENNAVFGVDWKQNLGIVSGGQDNKIQINNNPQSA. The segment at 207–228 is disordered; sequence RKEPGQVGKKELNYDSEEDSDE. Basic and acidic residues predominate over residues 208–219; the sequence is KEPGQVGKKELN.

The protein belongs to the WD repeat WDR12/YTM1 family. In terms of assembly, component of the NOP7 complex, composed of ERB1, NOP7 and YTM1. The complex is held together by ERB1, which interacts with NOP7 via its N-terminal domain and with YTM1 via a high-affinity interaction between the seven-bladed beta-propeller domains of the 2 proteins. The NOP7 complex associates with the 66S pre-ribosome. Interacts (via UBL domain) with MDN1 (via VWFA/MIDAS domain).

It localises to the nucleus. The protein resides in the nucleolus. Its subcellular location is the nucleoplasm. Its function is as follows. Component of the NOP7 complex, which is required for maturation of the 25S and 5.8S ribosomal RNAs and formation of the 60S ribosome. In Yarrowia lipolytica (strain CLIB 122 / E 150) (Yeast), this protein is Ribosome biogenesis protein YTM1.